The primary structure comprises 258 residues: UPF0246 protein Jann_0444 (258 aa).

It belongs to the UPF0246 family.

In Jannaschia sp. (strain CCS1), this protein is UPF0246 protein Jann_0444.